The primary structure comprises 228 residues: NAD(P)H-hydrate epimerase (228 aa).

In terms of domain architecture, YjeF N-terminal spans 9–209 (VRAVERLAHR…LLGLTPAFLA (201 aa)). Residue 53-57 (NNGGD) participates in (6S)-NADPHX binding. Residues asparagine 54 and aspartate 115 each coordinate K(+). Residues 119-125 (GIGLARP) and aspartate 148 each bind (6S)-NADPHX. Serine 151 is a binding site for K(+).

This sequence belongs to the NnrE/AIBP family. The cofactor is K(+).

The enzyme catalyses (6R)-NADHX = (6S)-NADHX. It carries out the reaction (6R)-NADPHX = (6S)-NADPHX. Functionally, catalyzes the epimerization of the S- and R-forms of NAD(P)HX, a damaged form of NAD(P)H that is a result of enzymatic or heat-dependent hydration. This is a prerequisite for the S-specific NAD(P)H-hydrate dehydratase to allow the repair of both epimers of NAD(P)HX. The polypeptide is NAD(P)H-hydrate epimerase (Bordetella bronchiseptica (strain ATCC BAA-588 / NCTC 13252 / RB50) (Alcaligenes bronchisepticus)).